The chain runs to 620 residues: Probable potassium transport system protein Kup 1 (620 aa).

Transmembrane regions (helical) follow at residues 7–27 (GIGL…TSPL), 50–70 (VLSL…VIVI), 102–122 (MMLG…TPAI), 136–156 (PDLK…LFAI), 168–188 (FGPV…ANIV), 211–231 (LMSF…EALY), 246–266 (WFGL…ALLI), 284–304 (MVVP…QAVI), 336–356 (IYVP…VVGF), 368–388 (IAVT…AALL), 393–413 (PVVV…FFAA), and 415–435 (IIKV…SFTV).

Belongs to the HAK/KUP transporter (TC 2.A.72) family.

Its subcellular location is the cell inner membrane. It catalyses the reaction K(+)(in) + H(+)(in) = K(+)(out) + H(+)(out). Its function is as follows. Transport of potassium into the cell. Likely operates as a K(+):H(+) symporter. This chain is Probable potassium transport system protein Kup 1, found in Rhodopseudomonas palustris (strain ATCC BAA-98 / CGA009).